An 88-amino-acid polypeptide reads, in one-letter code: MKTLLLTLVVVTIVCLDLGNTANTLFCDNSNVPSIRTRKRCLKNQKLCYKMTFFTPGFGWTQIKGCIHRCPESTPNEKYQCCSTDNCI.

A signal peptide spans 1 to 21 (MKTLLLTLVVVTIVCLDLGNT). 4 cysteine pairs are disulfide-bonded: Cys27-Cys48, Cys41-Cys66, Cys70-Cys81, and Cys82-Cys87.

The protein belongs to the three-finger toxin family. Ancestral subfamily. Orphan group II sub-subfamily. Expressed by the venom gland.

The protein resides in the secreted. Functionally, binds with low affinity to muscular (alpha-1-beta-1-delta-epsilon/CHRNA1-CHRNB1-CHRND-CHRNE) and very low affinity to neuronal (alpha-7/CHRNA7) nicotinic acetylcholine receptor (nAChR). The sequence is that of Three-finger toxin 3FTx-2 from Micrurus corallinus (Brazilian coral snake).